Consider the following 463-residue polypeptide: Ribosomal protein uS12 methylthiotransferase RimO (463 aa).

Residues 11–126 enclose the MTTase N-terminal domain; that stretch reads PKIGFVSLGC…VMEVVHTHCP (116 aa). Residues Cys-20, Cys-56, Cys-85, Cys-161, Cys-165, and Cys-168 each contribute to the [4Fe-4S] cluster site. Residues 147 to 388 form the Radical SAM core domain; sequence LTPRHYAYLK…MAVAEEVSTA (242 aa). A TRAM domain is found at 391–463; it reads QRRVGQTMQV…QGHDLVGVPV (73 aa).

It belongs to the methylthiotransferase family. RimO subfamily. [4Fe-4S] cluster is required as a cofactor.

It localises to the cytoplasm. The enzyme catalyses L-aspartate(89)-[ribosomal protein uS12]-hydrogen + (sulfur carrier)-SH + AH2 + 2 S-adenosyl-L-methionine = 3-methylsulfanyl-L-aspartate(89)-[ribosomal protein uS12]-hydrogen + (sulfur carrier)-H + 5'-deoxyadenosine + L-methionine + A + S-adenosyl-L-homocysteine + 2 H(+). Catalyzes the methylthiolation of an aspartic acid residue of ribosomal protein uS12. This chain is Ribosomal protein uS12 methylthiotransferase RimO, found in Acidovorax sp. (strain JS42).